A 385-amino-acid chain; its full sequence is Galactokinase (385 aa).

34-37 (EHTD) contributes to the substrate binding site. ATP is bound at residue 124-130 (SAGLSSS). Mg(2+) contacts are provided by serine 130 and glutamate 162. Catalysis depends on aspartate 174, which acts as the Proton acceptor. Tyrosine 223 provides a ligand contact to substrate.

This sequence belongs to the GHMP kinase family. GalK subfamily.

Its subcellular location is the cytoplasm. It catalyses the reaction alpha-D-galactose + ATP = alpha-D-galactose 1-phosphate + ADP + H(+). The protein operates within carbohydrate metabolism; galactose metabolism. Catalyzes the transfer of the gamma-phosphate of ATP to D-galactose to form alpha-D-galactose-1-phosphate (Gal-1-P). This is Galactokinase from Pasteurella multocida (strain Pm70).